Here is a 712-residue protein sequence, read N- to C-terminus: Lactoperoxidase (712 aa).

The N-terminal stretch at 1-22 (MWVCLQLPVFLASVTLFEVAAS) is a signal peptide. A propeptide spanning residues 23–100 (DTIAQAASTT…WEESLKRLRR (78 aa)) is cleaved from the precursor. Asn106 is a glycosylation site (N-linked (GlcNAc...) asparagine). 4 disulfide bridges follow: Cys123–Cys284, Cys132–Cys145, Cys246–Cys256, and Cys250–Cys274. An N-linked (GlcNAc...) asparagine glycan is attached at Asn212. Residue Asp225 participates in heme b binding. The active-site Proton acceptor is His226. Asp227 contacts Ca(2+). Ca(2+) contacts are provided by Thr301, Phe303, Asp305, and Ser307. Ser315 carries the post-translational modification Phosphoserine. 2 N-linked (GlcNAc...) asparagine glycosylation sites follow: Asn322 and Asn358. Cys354 and Cys365 are disulfide-bonded. Glu375 is a heme b binding site. Asn449 carries an N-linked (GlcNAc...) asparagine glycan. Position 468 (His468) interacts with heme b. At Tyr482 the chain carries 3'-nitrotyrosine. 2 disulfides stabilise this stretch: Cys573–Cys630 and Cys671–Cys696.

Belongs to the peroxidase family. XPO subfamily. Ca(2+) serves as cofactor. Requires heme b as cofactor. Mammary gland; milk.

The protein resides in the secreted. It is found in the cytoplasm. The enzyme catalyses 2 a phenolic donor + H2O2 = 2 a phenolic radical donor + 2 H2O. The catalysed reaction is thiocyanate + H2O2 + H(+) = hypothiocyanous acid + H2O. It catalyses the reaction iodide + H2O2 = hypoiodite + H2O. Functionally, heme-containing oxidoreductase which catalyzes the conversion of thiocyanate (SCN(-)) into antimicrobial agent hypothiocyanous acid (OSCN(-)) in the presence of hydrogen peroxide (H2O2). Also involved in the conversion of iodide (I(-)) into hypoiodite (IO(-)) in the presence of H2O2. Responsible for the inactivation of a wide range of micro-organisms and hence, important component of defense mechanism. The lactoperoxidase-SCN(-)-H2O2 system shows antibacterial properties against some streptococci strains. The lactoperoxidase-I(-)-H2O2 system shows antibacterial properties against E.coli. May protect the udder from infection and may promote growth in newborns. May be implicated in airway host defense against infection. May contribute to maintaining an appropriate H2O2 cellular level, therefore protecting cells from H2O2-caused injuries and inflammation. In Bos taurus (Bovine), this protein is Lactoperoxidase (LPO).